The following is a 733-amino-acid chain: Zinc finger transcription factor ace1 (733 aa).

Residues 1–11 (MSFSNPRRRTP) show a composition bias toward basic residues. Disordered regions lie at residues 1-22 (MSFS…CEHG), 34-63 (GATF…SQSA), and 89-183 (ASLS…SSTT). A compositionally biased stretch (low complexity) spans 39–49 (SPTSPSASSAA). Positions 132 to 142 (LRPRSVRRTRN) are enriched in basic residues. The segment covering 148–158 (GIGSSVVSTND) has biased composition (polar residues). Positions 171–183 (ASALTRSAASSTT) are enriched in low complexity. 3 consecutive C2H2-type zinc fingers follow at residues 400-424 (KKCR…EKTH), 428-456 (WKCP…NDKH), and 463-488 (YECL…EKAH). Positions 497 to 533 (TNGKKAPSQNGSTAQQTPPLANVSTPSSTPSYSVPTP) are disordered. A compositionally biased stretch (polar residues) spans 503-515 (PSQNGSTAQQTPP). Residues 519–530 (VSTPSSTPSYSV) are compositionally biased toward low complexity.

It localises to the nucleus. Functionally, binds to the promoter of the cbh1 gene and activates transcription. This Hypocrea jecorina (Trichoderma reesei) protein is Zinc finger transcription factor ace1 (ace1).